The primary structure comprises 84 residues: NADH-ubiquinone oxidoreductase chain 4L (84 aa).

Transmembrane regions (helical) follow at residues 19 to 39 (ITLL…LIHI) and 50 to 70 (IFSL…LSIL).

It belongs to the complex I subunit 4L family.

It is found in the mitochondrion membrane. It carries out the reaction a ubiquinone + NADH + 5 H(+)(in) = a ubiquinol + NAD(+) + 4 H(+)(out). Core subunit of the mitochondrial membrane respiratory chain NADH dehydrogenase (Complex I) that is believed to belong to the minimal assembly required for catalysis. Complex I functions in the transfer of electrons from NADH to the respiratory chain. The immediate electron acceptor for the enzyme is believed to be ubiquinone. This chain is NADH-ubiquinone oxidoreductase chain 4L (NAD4L), found in Candida albicans (strain SC5314 / ATCC MYA-2876) (Yeast).